A 325-amino-acid chain; its full sequence is MQTLTQHLTSQAVNDSLSHLILTLADTSKAISHAVRHGALAGVLGATEQENVQGETQKKLDIITNDMLKDALKADGTVRGLASEEEDHVVEVRQNGQYLVCFDPLDGSSNIDINSLVGTIFSILPAPAGELTETSFLQSGRAQLAAGYVLYGPSTMLALTTGQGVQLFTLDPETNEFLLTNAAMSISPETQEFAINMSNQRFWEAPMQTYIADLLLGKIGPREKSFNMRWIAAMVGDVHRVLSRGGIFTYPSDNKDPKKPYKLRLMYEANPMAFLVEQAGGKASTGYETILDITPTHIHQRVAVILGSANEVDACLSYHGIDSHK.

E84, D103, L105, and D106 together coordinate Mg(2+). Substrate-binding positions include 106–109, N196, and K262; that span reads DGSS. E268 lines the Mg(2+) pocket.

This sequence belongs to the FBPase class 1 family. In terms of assembly, homotetramer. Requires Mg(2+) as cofactor.

It localises to the cytoplasm. The catalysed reaction is beta-D-fructose 1,6-bisphosphate + H2O = beta-D-fructose 6-phosphate + phosphate. It functions in the pathway carbohydrate biosynthesis; gluconeogenesis. This Shewanella baltica (strain OS195) protein is Fructose-1,6-bisphosphatase class 1.